Reading from the N-terminus, the 431-residue chain is Probable oxidoreductase OrdL (431 aa).

This chain is Probable oxidoreductase OrdL (ordL), found in Haemophilus influenzae (strain ATCC 51907 / DSM 11121 / KW20 / Rd).